The sequence spans 248 residues: Leucyl/phenylalanyl-tRNA--protein transferase (248 aa).

The protein belongs to the L/F-transferase family.

It is found in the cytoplasm. It carries out the reaction N-terminal L-lysyl-[protein] + L-leucyl-tRNA(Leu) = N-terminal L-leucyl-L-lysyl-[protein] + tRNA(Leu) + H(+). The catalysed reaction is N-terminal L-arginyl-[protein] + L-leucyl-tRNA(Leu) = N-terminal L-leucyl-L-arginyl-[protein] + tRNA(Leu) + H(+). The enzyme catalyses L-phenylalanyl-tRNA(Phe) + an N-terminal L-alpha-aminoacyl-[protein] = an N-terminal L-phenylalanyl-L-alpha-aminoacyl-[protein] + tRNA(Phe). In terms of biological role, functions in the N-end rule pathway of protein degradation where it conjugates Leu, Phe and, less efficiently, Met from aminoacyl-tRNAs to the N-termini of proteins containing an N-terminal arginine or lysine. The protein is Leucyl/phenylalanyl-tRNA--protein transferase of Rhizorhabdus wittichii (strain DSM 6014 / CCUG 31198 / JCM 15750 / NBRC 105917 / EY 4224 / RW1) (Sphingomonas wittichii).